The primary structure comprises 464 residues: Meiotic plaque component protein 54 (464 aa).

The tract at residues 71-102 is disordered; sequence SISTTITPNKSSLKSPRGKRASKNSFDNETKL. Coiled-coil stretches lie at residues 99-119, 156-193, and 231-365; these read ETKL…VNRC, KAEC…DHLL, and SINS…LQTQ.

In terms of assembly, interacts directly with SPO21/MPC70, NUD1, SPO74 and SPC42. Probable component of a spindle pole body (SPB) complex composed of ADY3, SSP1, DON1, MPC54, SPO21/MPC70, NUD1 and CNM67.

It localises to the prospore membrane. It is found in the cytoplasm. Its subcellular location is the cytoskeleton. The protein localises to the microtubule organizing center. The protein resides in the spindle pole body. It localises to the spindle pole. Its function is as follows. Involved in the pathway that organizes the shaping and sizing of the prospore membrane (PSM) during sporulation. The sequence is that of Meiotic plaque component protein 54 (MPC54) from Saccharomyces cerevisiae (strain ATCC 204508 / S288c) (Baker's yeast).